The sequence spans 365 residues: tRNA dimethylallyltransferase (365 aa).

Residue 23–30 participates in ATP binding; the sequence is APTASGKT. 25–30 provides a ligand contact to substrate; that stretch reads TASGKT. 3 interaction with substrate tRNA regions span residues 48-51, 172-176, and 256-261; these read DSAL, QRITR, and RCVGYR.

It belongs to the IPP transferase family. Monomer. The cofactor is Mg(2+).

The catalysed reaction is adenosine(37) in tRNA + dimethylallyl diphosphate = N(6)-dimethylallyladenosine(37) in tRNA + diphosphate. Catalyzes the transfer of a dimethylallyl group onto the adenine at position 37 in tRNAs that read codons beginning with uridine, leading to the formation of N6-(dimethylallyl)adenosine (i(6)A). In Psychrobacter sp. (strain PRwf-1), this protein is tRNA dimethylallyltransferase.